A 176-amino-acid chain; its full sequence is Dual-action ribosomal maturation protein DarP (176 aa).

The protein belongs to the DarP family.

The protein localises to the cytoplasm. Member of a network of 50S ribosomal subunit biogenesis factors which assembles along the 30S-50S interface, preventing incorrect 23S rRNA structures from forming. Promotes peptidyl transferase center (PTC) maturation. The protein is Dual-action ribosomal maturation protein DarP of Actinobacillus pleuropneumoniae serotype 5b (strain L20).